The following is a 93-amino-acid chain: Phosphoribosyl-ATP pyrophosphatase (93 aa).

This sequence belongs to the PRA-PH family.

The protein resides in the cytoplasm. The enzyme catalyses 1-(5-phospho-beta-D-ribosyl)-ATP + H2O = 1-(5-phospho-beta-D-ribosyl)-5'-AMP + diphosphate + H(+). It functions in the pathway amino-acid biosynthesis; L-histidine biosynthesis; L-histidine from 5-phospho-alpha-D-ribose 1-diphosphate: step 2/9. This is Phosphoribosyl-ATP pyrophosphatase from Mycolicibacterium vanbaalenii (strain DSM 7251 / JCM 13017 / BCRC 16820 / KCTC 9966 / NRRL B-24157 / PYR-1) (Mycobacterium vanbaalenii).